A 147-amino-acid chain; its full sequence is Hemoglobin subunit beta (147 aa).

Val2 carries the post-translational modification N-acetylvaline. The Globin domain occupies 3–147 (HLTGEEKAAV…VANALAHKYH (145 aa)). Thr13 carries the post-translational modification Phosphothreonine. Ser45 bears the Phosphoserine mark. Lys60 is modified (N6-acetyllysine). Heme b is bound at residue His64. At Lys83 the chain carries N6-acetyllysine. His93 is a binding site for heme b. S-nitrosocysteine is present on Cys94. Lys145 carries the post-translational modification N6-acetyllysine.

It belongs to the globin family. Heterotetramer of two alpha chains and two beta chains. Red blood cells.

Involved in oxygen transport from the lung to the various peripheral tissues. The polypeptide is Hemoglobin subunit beta (HBB) (Ateles belzebuth (White-bellied spider monkey)).